Here is a 902-residue protein sequence, read N- to C-terminus: Glycogen phosphorylase (902 aa).

A disordered region spans residues 1-21 (MPPASTSTTNDMITEEPTSPH). The residue at position 31 (Thr-31) is a Phosphothreonine. Ser-333 is subject to Phosphoserine. At Lys-751 the chain carries N6-(pyridoxal phosphate)lysine.

Belongs to the glycogen phosphorylase family. In terms of assembly, homodimer. The cofactor is pyridoxal 5'-phosphate.

It localises to the cytoplasm. Its subcellular location is the cytosol. It carries out the reaction [(1-&gt;4)-alpha-D-glucosyl](n) + phosphate = [(1-&gt;4)-alpha-D-glucosyl](n-1) + alpha-D-glucose 1-phosphate. Activated by phosphorylation of Thr-31. In terms of biological role, phosphorylase is an important allosteric enzyme in carbohydrate metabolism. Enzymes from different sources differ in their regulatory mechanisms and in their natural substrates. However, all known phosphorylases share catalytic and structural properties. The polypeptide is Glycogen phosphorylase (GPH1) (Saccharomyces cerevisiae (strain ATCC 204508 / S288c) (Baker's yeast)).